The chain runs to 646 residues: Threonine--tRNA ligase (646 aa).

The 63-residue stretch at 1-63 folds into the TGS domain; sequence MADLSIIFPD…SSGGSIEIIT (63 aa). The segment at 244-541 is catalytic; that stretch reads DHRKLGKELG…LIEEYKGAFP (298 aa). Residues Cys337, His388, and His518 each coordinate Zn(2+).

This sequence belongs to the class-II aminoacyl-tRNA synthetase family. As to quaternary structure, homodimer. Zn(2+) serves as cofactor.

The protein localises to the cytoplasm. It carries out the reaction tRNA(Thr) + L-threonine + ATP = L-threonyl-tRNA(Thr) + AMP + diphosphate + H(+). Functionally, catalyzes the attachment of threonine to tRNA(Thr) in a two-step reaction: L-threonine is first activated by ATP to form Thr-AMP and then transferred to the acceptor end of tRNA(Thr). Also edits incorrectly charged L-seryl-tRNA(Thr). This is Threonine--tRNA ligase from Oceanobacillus iheyensis (strain DSM 14371 / CIP 107618 / JCM 11309 / KCTC 3954 / HTE831).